The chain runs to 286 residues: MSGIDDLPPLRDVIKRHDLSARKSLGQNFLLDLNLLTRIARAAGPLDGATVIEIGPGPGGLTRALLALGAAKVIAIERDERALGALQEIAAHYPGRLEIVCADATIYDPRPLLGGARAKIVANLPYNIATPLLIGWLSIEPWPPWYDTMVLMFQREVAERIVAREDDEAYGRLAVLANWRAETKLLFDISPAAFVPQPKVTSSVVRLVPRETPEPCDRRMLEQVAAAAFGQRRKMLRQSLKPLGVDPARLAAAAGVDPTRRAETIAVSGFVAMARELTDIRAIKSV.

N28, L30, G55, E77, D103, and N123 together coordinate S-adenosyl-L-methionine.

Belongs to the class I-like SAM-binding methyltransferase superfamily. rRNA adenine N(6)-methyltransferase family. RsmA subfamily.

The protein localises to the cytoplasm. The catalysed reaction is adenosine(1518)/adenosine(1519) in 16S rRNA + 4 S-adenosyl-L-methionine = N(6)-dimethyladenosine(1518)/N(6)-dimethyladenosine(1519) in 16S rRNA + 4 S-adenosyl-L-homocysteine + 4 H(+). In terms of biological role, specifically dimethylates two adjacent adenosines (A1518 and A1519) in the loop of a conserved hairpin near the 3'-end of 16S rRNA in the 30S particle. May play a critical role in biogenesis of 30S subunits. This is Ribosomal RNA small subunit methyltransferase A from Rhodopseudomonas palustris (strain BisB18).